The sequence spans 1059 residues: Zinc finger protein 658 (1059 aa).

The KRAB domain occupies 8-79 (VSFQDVTVEF…EDEFLNQRYP (72 aa)). A Glycyl lysine isopeptide (Lys-Gly) (interchain with G-Cter in SUMO2) cross-link involves residue K178. The C2H2-type 1; degenerate zinc-finger motif lies at 325 to 347 (FESNKCEENFSQSSAHIVHQKTQ). A C2H2-type 2; degenerate zinc finger spans residues 352-375 (FGEHNECTDALYQKLDFTAHQRIH). A C2H2-type 3; degenerate zinc finger spans residues 381-406 (YLSDEHGKCRKSFYRKAHLIQHQRPH). A C2H2-type 4; degenerate zinc finger spans residues 412–434 (YQYEECAKSFCSSSHPIQHPGTY). 14 C2H2-type zinc fingers span residues 440-462 (YECNECGKAFCQNSNLSKHLRIH), 518-540 (YECIECGKTFSKTSHLRAHQRIH), 546-568 (YECVECEKTFSHKTHLSVHQRVH), 574-596 (YECNDCGKSFTYNSALRAHQRIH), 602-624 (YECSDCEKTFAHNSALRAHHRIH), 630-652 (YECNECGRSFAHISVLKAHQRIH), 658-680 (YECNECGRSFTYNSALRAHQRIH), 686-708 (YECSDCEKTFAHNSALKIHQRIH), 714-736 (YECNECEKTFAHNSALRAHQNIH), 742-764 (YECSECGKTFFQKTRLSTHRRIH), 770-792 (YECSKCGKTFSQKSYLSGHERIH), 798-820 (YECNVCGKTFVYKAALIVHQRIH), 826-848 (YECNQCGKTFSQRTHLCAHQRIH), and 854-876 (YECNECGKTFADNSALRAHHRIH). The C2H2-type 19; degenerate zinc finger occupies 882 to 904 (YECNDCGKTFSKTSHLRAHLRTR). C2H2-type zinc fingers lie at residues 910–932 (YECSECGKTFSEKSYVSAHQRVH), 938–960 (YECNVCGKPFAHNSTLRVHQRIH), 966–988 (YECNDCGKTFSQKSHLSAHQRIH), 994–1016 (YECNECGKAFAQNSTLRVHQRIH), and 1022–1045 (YECDECGKTFVRKAALRVHHTRMH).

It belongs to the krueppel C2H2-type zinc-finger protein family.

The protein localises to the nucleus. In terms of biological role, mediates transcriptional repression in response to zinc. Represses several genes, including SLC30A5, SLC30A10 and CBWD1, by binding to the zinc transcriptional regulatory element (ZTRE) (5'-C[AC]C[TAG]CC[TC]-N(0-50)-[GA]G[ATC]G[TG]G-3') found in the promoter region. May play a role in the control of ribosome biogenesis, regulating predominantly rRNA levels, as well as those of several ribosomal proteins, thus coordinating this highly zinc-demanding process with the available zinc supply. This chain is Zinc finger protein 658 (ZNF658), found in Homo sapiens (Human).